Here is a 321-residue protein sequence, read N- to C-terminus: Phosphatidylglycerol phospholipase C (321 aa).

The GP-PDE domain maps to 2–251 (VEIVGHRAFK…DDPIKARKLC (250 aa)). The helical; Anchor for type IV membrane protein transmembrane segment at 297 to 315 (WVHIKLCGWSIAYVIFLFL) threads the bilayer.

This sequence belongs to the glycerophosphoryl diester phosphodiesterase family.

It localises to the mitochondrion membrane. The protein resides in the lipid droplet. The enzyme catalyses a 1,2-diacyl-sn-glycero-3-phospho-(1'-sn-glycerol) + H2O = sn-glycerol 3-phosphate + a 1,2-diacyl-sn-glycerol + H(+). Functionally, phosphatidylglycerol phospholipase required for the removal of excess phosphatidylglycerol (PG) via a phospholipase C-type degradation mechanism. In Saccharomyces cerevisiae (strain ATCC 204508 / S288c) (Baker's yeast), this protein is Phosphatidylglycerol phospholipase C (PGC1).